A 77-amino-acid polypeptide reads, in one-letter code: Conotoxin ArMSGL-0141 (77 aa).

The N-terminal stretch at 1–18 (MSGLGILVLTLLLLVYMA) is a signal peptide. The propeptide occupies 19–44 (TSHQDAGEKQATQRDAINVRRRRSLT). 3 disulfide bridges follow: Cys51-Cys63, Cys55-Cys71, and Cys62-Cys75. Phe76 carries the phenylalanine amide modification.

It belongs to the conotoxin O3 superfamily. In terms of tissue distribution, expressed by the venom duct.

Its subcellular location is the secreted. The sequence is that of Conotoxin ArMSGL-0141 from Conus arenatus (Sand-dusted cone).